The sequence spans 1537 residues: Dicer-like protein 1 (1537 aa).

The interval 38 to 68 (SDPAESSVDVQDEHSSDDSDNENEVFPKQND) is disordered. The region spanning 133-314 (LFERAKTQNT…EAATRLETFL (182 aa)) is the Helicase ATP-binding domain. 146–153 (LDTGSGKT) lines the ATP pocket. Residues 259–262 (DEAH) carry the DEAH box motif. Positions 459–618 (ELSKHFNDTT…EILPEDRILH (160 aa)) constitute a Helicase C-terminal domain. The Dicer dsRNA-binding fold domain occupies 651 to 741 (AIAILARYAS…NSIYHRRLPA (91 aa)). In terms of domain architecture, PAZ spans 891 to 1019 (DTVSFVHNND…ICAEPLRISA (129 aa)). RNase III domains lie at 1043–1202 (IALE…LSGG) and 1253–1405 (ARHV…VDSK). Mg(2+) contacts are provided by glutamate 1294, aspartate 1391, and glutamate 1394. One can recognise a DRBM domain in the interval 1439–1507 (TFLHNKLTNE…SEKALAVLDG (69 aa)). Zn(2+)-binding residues include cysteine 1451, histidine 1478, cysteine 1519, and cysteine 1521.

Belongs to the helicase family. Dicer subfamily. Requires Mg(2+) as cofactor. It depends on Mn(2+) as a cofactor.

Dicer-like endonuclease involved in cleaving double-stranded RNA in the RNA interference (RNAi) pathway. Produces 21 to 25 bp dsRNAs (siRNAs) which target the selective destruction of homologous RNAs leading to sequence-specific suppression of gene expression, called post-transcriptional gene silencing (PTGS). Part of a broad host defense response against viral infection and transposons. The polypeptide is Dicer-like protein 1 (dcl1) (Aspergillus fumigatus (strain ATCC MYA-4609 / CBS 101355 / FGSC A1100 / Af293) (Neosartorya fumigata)).